The following is a 539-amino-acid chain: Chaperonin GroEL (539 aa).

Residues 29–32 (TLGP), 86–90 (DGTTT), glycine 413, 477–479 (DAL), and aspartate 493 contribute to the ATP site.

This sequence belongs to the chaperonin (HSP60) family. As to quaternary structure, forms a cylinder of 14 subunits composed of two heptameric rings stacked back-to-back. Interacts with the co-chaperonin GroES.

It is found in the cytoplasm. It catalyses the reaction ATP + H2O + a folded polypeptide = ADP + phosphate + an unfolded polypeptide.. Functionally, together with its co-chaperonin GroES, plays an essential role in assisting protein folding. The GroEL-GroES system forms a nano-cage that allows encapsulation of the non-native substrate proteins and provides a physical environment optimized to promote and accelerate protein folding. The protein is Chaperonin GroEL of Clostridium perfringens (strain 13 / Type A).